Here is a 411-residue protein sequence, read N- to C-terminus: Tubulin beta-2 chain (411 aa).

GTP contacts are provided by E37, S106, G110, T111, G112, N172, and N194. E37 contributes to the Mg(2+) binding site. Residues 392 to 411 (QYQDATAEPEGXYEEDYDEA) are disordered. Residues 402-411 (GXYEEDYDEA) show a composition bias toward acidic residues.

Belongs to the tubulin family. Dimer of alpha and beta chains. A typical microtubule is a hollow water-filled tube with an outer diameter of 25 nm and an inner diameter of 15 nM. Alpha-beta heterodimers associate head-to-tail to form protofilaments running lengthwise along the microtubule wall with the beta-tubulin subunit facing the microtubule plus end conferring a structural polarity. Microtubules usually have 13 protofilaments but different protofilament numbers can be found in some organisms and specialized cells. Mg(2+) serves as cofactor.

It localises to the cytoplasm. The protein localises to the cytoskeleton. Its function is as follows. Tubulin is the major constituent of microtubules, a cylinder consisting of laterally associated linear protofilaments composed of alpha- and beta-tubulin heterodimers. Microtubules grow by the addition of GTP-tubulin dimers to the microtubule end, where a stabilizing cap forms. Below the cap, tubulin dimers are in GDP-bound state, owing to GTPase activity of alpha-tubulin. This chain is Tubulin beta-2 chain (TUBB2), found in Anemia phyllitidis (Fern).